A 180-amino-acid chain; its full sequence is Major urinary protein 1 (180 aa).

The signal sequence occupies residues 1–18; the sequence is MKMLLLLCLGLTLVCVHA. Cys-82 and Cys-175 are joined by a disulfide.

Belongs to the calycin superfamily. Lipocalin family. Abundant in the urine of adult male mice but absent from that of females.

The protein resides in the secreted. In terms of biological role, binds pheromones that are released from drying urine of males. These pheromones affect the sexual behavior of females. In Mus musculus (Mouse), this protein is Major urinary protein 1 (Mup1).